The following is a 210-amino-acid chain: Protein GET1 (210 aa).

At 1–4 (MPSL) the chain is on the lumenal side. The chain crosses the membrane as a helical span at residues 5–24 (LIIVLIIHVVTYLINTIGAN). At 25-110 (TIDSLLWLLY…SFDLAVKSVR (86 aa)) the chain is on the cytoplasmic side. Positions 39-95 (NQTSQTADEQRRLKREVMQLKREMNATSSQDEFAKWAKLRRRHDKTMEEYEAKNKAL) form a coiled coil. A helical membrane pass occupies residues 111 to 131 (FFSTTGLKLFLQFWFSKTPIF). Residues 132–155 (ELPRGWIPWQVEWVLSFPRAPLGT) are Lumenal-facing. A helical transmembrane segment spans residues 156–172 (VSIQIWGGVCATVVSLA). Topologically, residues 173–210 (GDAIGVVNVYLTSKAPKQKEPATSGENSARPMAIKKEL) are cytoplasmic. Residues 189–210 (KQKEPATSGENSARPMAIKKEL) are disordered.

Belongs to the WRB/GET1 family. In terms of assembly, interacts with GET3.

It is found in the endoplasmic reticulum membrane. Functionally, required for the post-translational delivery of tail-anchored (TA) proteins to the endoplasmic reticulum. Acts as a membrane receptor for soluble GET3, which recognizes and selectively binds the transmembrane domain of TA proteins in the cytosol. This Coccidioides posadasii (strain C735) (Valley fever fungus) protein is Protein GET1.